Here is a 492-residue protein sequence, read N- to C-terminus: E3 ubiquitin-protein ligase XIAP (492 aa).

BIR repeat units lie at residues 40 to 105 (RLAS…KFIN), 172 to 237 (RLQT…YFVL), and 271 to 334 (RLET…KFLI). Zn(2+) is bound by residues C303, C306, H323, and C330. The RING-type zinc finger occupies 445–480 (CKVCMDRRISIVFIPCGHLVACAVCADVLDKCPICC).

Belongs to the IAP family. As to quaternary structure, monomer, and homodimer. Post-translationally, degraded in a 2-step mechanism; a caspase-independent first step and a caspase-dependent second step. Stabilized indirectly by MAPK, which acts to delay caspase activation, rather than directly phosphorylating xiap.

The protein localises to the cytoplasm. The catalysed reaction is S-ubiquitinyl-[E2 ubiquitin-conjugating enzyme]-L-cysteine + [acceptor protein]-L-lysine = [E2 ubiquitin-conjugating enzyme]-L-cysteine + N(6)-ubiquitinyl-[acceptor protein]-L-lysine.. In terms of biological role, multi-functional protein which regulates not only caspases and apoptosis, but also acts as an E3 ubiquitin-protein ligase mediating ubiquitination and subsequent proteasomal degradation of its target proteins. Acts as a direct caspase inhibitor. E3 ubiquitin-protein ligase that acts as an important regulator of innate immunity by mediating 'Lys-63'-linked polyubiquitination of ripk2 downstream of NOD1 and NOD2, thereby transforming ripk2 into a scaffolding protein for downstream effectors, ultimately leading to activation of the NF-kappa-B and MAP kinases signaling. A key apoptotic suppressor in eggs. Acts as a positive regulator of Wnt signaling. This chain is E3 ubiquitin-protein ligase XIAP (xiap), found in Xenopus tropicalis (Western clawed frog).